A 386-amino-acid polypeptide reads, in one-letter code: Tubulin beta-1 chain (386 aa).

GTP is bound by residues glutamate 7, serine 76, glycine 80, threonine 81, glycine 82, asparagine 142, and asparagine 164. Glutamate 7 is a binding site for Mg(2+). The interval 363–386 (YQDATADEEGEYEDEEEDLQAEDM) is disordered. Residues 367 to 386 (TADEEGEYEDEEEDLQAEDM) are compositionally biased toward acidic residues.

It belongs to the tubulin family. As to quaternary structure, dimer of alpha and beta chains. A typical microtubule is a hollow water-filled tube with an outer diameter of 25 nm and an inner diameter of 15 nM. Alpha-beta heterodimers associate head-to-tail to form protofilaments running lengthwise along the microtubule wall with the beta-tubulin subunit facing the microtubule plus end conferring a structural polarity. Microtubules usually have 13 protofilaments but different protofilament numbers can be found in some organisms and specialized cells. The cofactor is Mg(2+).

Its subcellular location is the cytoplasm. The protein localises to the cytoskeleton. In terms of biological role, tubulin is the major constituent of microtubules, a cylinder consisting of laterally associated linear protofilaments composed of alpha- and beta-tubulin heterodimers. Microtubules grow by the addition of GTP-tubulin dimers to the microtubule end, where a stabilizing cap forms. Below the cap, tubulin dimers are in GDP-bound state, owing to GTPase activity of alpha-tubulin. The protein is Tubulin beta-1 chain (TUBB1) of Avena sativa (Oat).